The chain runs to 354 residues: Guanine nucleotide-binding protein subunit alpha-14 (354 aa).

One can recognise a G-alpha domain in the interval 33-354; that stretch reads RELKLLLLGT…QLNLREFNLV (322 aa). A G1 motif region spans residues 36-49; sequence KLLLLGTGESGKST. GTP contacts are provided by residues 41–48, 175–181, 200–204, 269–272, and Ala-326; these read GTGESGKS, LRVRVPT, DVGGQ, and NKKD. Residues Ser-48 and Thr-181 each contribute to the Mg(2+) site. The interval 173-181 is G2 motif; that stretch reads DVLRVRVPT. A G3 motif region spans residues 196–205; the sequence is FRMVDVGGQR. A G4 motif region spans residues 265 to 272; that stretch reads ILFLNKKD. Residues 324–329 form a G5 motif region; the sequence is TCATDT.

The protein belongs to the G-alpha family. G(q) subfamily. G proteins are composed of 3 units; alpha, beta and gamma. The alpha chain contains the guanine nucleotide binding site.

Guanine nucleotide-binding proteins (G proteins) are involved as modulators or transducers in various transmembrane signaling systems. Acts as an activator of phospholipase C. Mediates responses to trypsin. This is Guanine nucleotide-binding protein subunit alpha-14 (gna14) from Xenopus laevis (African clawed frog).